Here is a 431-residue protein sequence, read N- to C-terminus: Beta-lactamase hydrolase-like protein (431 aa).

Residues His-212, His-214, and His-286 each coordinate Zn(2+). Asp-309 contributes to the substrate binding site.

The protein belongs to the metallo-beta-lactamase superfamily. Zn(2+) serves as cofactor.

Could play a role in cell adherence or biofilm development. This Xylella fastidiosa (strain Temecula1 / ATCC 700964) protein is Beta-lactamase hydrolase-like protein.